A 327-amino-acid polypeptide reads, in one-letter code: Germination protease (327 aa).

A propeptide spanning residues Met1–Asp7 is cleaved from the precursor.

It belongs to the peptidase A25 family. As to quaternary structure, homotetramer. Post-translationally, autoproteolytically processed. The inactive tetrameric zymogen termed p46 autoprocesses to a smaller form termed p41, which is active only during spore germination.

It catalyses the reaction Endopeptidase action with P4 Glu or Asp, P1 preferably Glu &gt; Asp, P1' hydrophobic and P2' Ala.. In terms of biological role, initiates the rapid degradation of small, acid-soluble proteins during spore germination. The polypeptide is Germination protease (Clostridium acetobutylicum (strain ATCC 824 / DSM 792 / JCM 1419 / IAM 19013 / LMG 5710 / NBRC 13948 / NRRL B-527 / VKM B-1787 / 2291 / W)).